The sequence spans 79 residues: Acyl carrier protein (79 aa).

Residues 4–79 (AEIKDKVYDI…QAIDYIVNKK (76 aa)) enclose the Carrier domain. Position 39 is an O-(pantetheine 4'-phosphoryl)serine (S39).

This sequence belongs to the acyl carrier protein (ACP) family. Post-translationally, 4'-phosphopantetheine is transferred from CoA to a specific serine of apo-ACP by AcpS. This modification is essential for activity because fatty acids are bound in thioester linkage to the sulfhydryl of the prosthetic group.

The protein localises to the cytoplasm. It participates in lipid metabolism; fatty acid biosynthesis. Carrier of the growing fatty acid chain in fatty acid biosynthesis. This chain is Acyl carrier protein, found in Chlorobaculum parvum (strain DSM 263 / NCIMB 8327) (Chlorobium vibrioforme subsp. thiosulfatophilum).